Reading from the N-terminus, the 187-residue chain is uncharacterized protein (187 aa).

Residues 42 to 63 (RTNGPGKDSFSFSTSGSKPSSS) form a disordered region. Low complexity predominate over residues 50 to 63 (SFSFSTSGSKPSSS).

This is an uncharacterized protein from Saccharomyces cerevisiae (strain ATCC 204508 / S288c) (Baker's yeast).